We begin with the raw amino-acid sequence, 91 residues long: MAVKIRLTRMGSKKKPFYRINVADSRAPRDGRFIETVGTYNPLVTENQVTLKEDRILEWLGNGAQPSDTVRNILSKAGIMQKFHEAKYSKK.

The protein belongs to the bacterial ribosomal protein bS16 family.

The protein is Small ribosomal subunit protein bS16 of Streptococcus mutans serotype c (strain ATCC 700610 / UA159).